A 320-amino-acid chain; its full sequence is tRNA (guanosine(34)-2'-O)-methyltransferase (320 aa).

Positions 53, 55, 81, 97, and 122 each coordinate S-adenosyl-L-methionine. Lysine 162 (proton acceptor) is an active-site residue.

It belongs to the class I-like SAM-binding methyltransferase superfamily. RNA methyltransferase RlmE family. TRM7 subfamily. In terms of assembly, interacts with CG33172/WDR6.

The protein localises to the cytoplasm. The catalysed reaction is cytidine(32)/guanosine(34) in tRNA + 2 S-adenosyl-L-methionine = 2'-O-methylcytidine(32)/2'-O-methylguanosine(34) in tRNA + 2 S-adenosyl-L-homocysteine + 2 H(+). In terms of biological role, methylates the 2'-O-ribose of nucleotides at position 34 of the tRNA anticodon loop of substrate tRNAs. May require WDR6 for methylation of the nucleotide at position 34 of the anticodon loop of substrate tRNAs. Plays a role in neurogenesis. Requisite for RNA-mediated gene silencing. Modifies position 34 in tRNA(Leu(CAA)), tRNA(Leu(CAG)), tRNA(Phe(GAA)), and tRNA(Trp(CCA)). The protein is tRNA (guanosine(34)-2'-O)-methyltransferase of Drosophila melanogaster (Fruit fly).